The sequence spans 517 residues: N-acetylglucosamine-1-phosphodiester alpha-N-acetylglucosaminidase (517 aa).

An N-terminal signal peptide occupies residues 1–25 (MAAPRGPGLFLIPALLGLLGVAWCS). A propeptide spans 26–49 (LSFGVSRDDDLLLPYPLARRRPSR) (removed in mature form). Positions 49 to 75 (RDCARVRSGSPEQESWPPPPTNPGASH) are disordered. Over 50–453 (DCARVRSGSP…ASFTRTTWLA (404 aa)) the chain is Lumenal. 5 disulfides stabilise this stretch: Cys-116-Cys-149, Cys-133-Cys-324, Cys-308-Cys-315, Cys-363-Cys-374, and Cys-381-Cys-390. Asn-215 and Asn-297 each carry an N-linked (GlcNAc...) asparagine glycan. Residues 359 to 391 (SELDCGPSNCSQHGLCTETGCHCDAGWTGSNCS) form the EGF-like domain. Residues Asn-367, Asn-389, and Asn-421 are each glycosylated (N-linked (GlcNAc...) asparagine). The chain crosses the membrane as a helical span at residues 454–474 (LTLTLIFLLLISTGVNVSLFL). The Cytoplasmic segment spans residues 475 to 517 (GSRAERNRHLDGDYVYHPLQEVNGEALTAEKEHMEETSNPFKD). Positions 488 to 491 (YVYH) match the Tyrosine-based internalization motif motif. A mediates the interaction with AP4M1 region spans residues 488-495 (YVYHPLQE). Positions 511–515 (TSNPF) match the NPF internalization motif motif.

As to quaternary structure, homotetramer arranged as two disulfide-linked homodimers. Interacts with AP4M1. Post-translationally, the precursor is cleaved and activated in the trans-Golgi network by a furin endopeptidase.

It is found in the golgi apparatus. The protein localises to the golgi stack membrane. Its subcellular location is the trans-Golgi network. It catalyses the reaction N(4)-[6-(N-acetyl-alpha-D-glucosaminyl-1-phospho)-alpha-D-mannosyl-(1-&gt;2)-alpha-D-mannosyl-(glycan)]-L-asparaginyl-[protein] + H2O = N(4)-[6-phospho-alpha-D-mannosyl-(1-&gt;2)-alpha-D-mannosyl-(glycan)]-L-asparaginyl-[protein] + N-acetyl-D-glucosamine + H(+). Its pathway is protein modification; protein glycosylation. In terms of biological role, catalyzes the second step in the formation of the mannose 6-phosphate targeting signal on lysosomal enzyme oligosaccharides by removing GlcNAc residues from GlcNAc-alpha-P-mannose moieties, which are formed in the first step. Also hydrolyzes UDP-GlcNAc, a sugar donor for Golgi N-acetylglucosaminyltransferases. The protein is N-acetylglucosamine-1-phosphodiester alpha-N-acetylglucosaminidase (Nagpa) of Mus musculus (Mouse).